We begin with the raw amino-acid sequence, 849 residues long: Coiled-coil domain-containing protein 87 (849 aa).

A coiled-coil region spans residues 387–415 (RHPAAGHRLEELEKMLRNLQEEEASGQWD).

The protein belongs to the CCDC87 family.

Plays a role in spermatogenesis, where it is important for normal sperm head morphology. Also required for the acrosome reaction and thus normal male fertility. In Homo sapiens (Human), this protein is Coiled-coil domain-containing protein 87 (CCDC87).